The sequence spans 269 residues: Major pollen allergen Pha a 1 (269 aa).

The signal sequence occupies residues 1 to 29 (MMKMVCSSSSSSLLVVAALLAVFVGSAQG). An N-linked (GlcNAc...) asparagine glycan is attached at Asn-38. The Expansin-like EG45 domain occupies 67-173 (GGACGYKDVD…RRVKCKYPDG (107 aa)). Positions 187 to 268 (NYLALLVKYV…GWKADTHDAS (82 aa)) constitute an Expansin-like CBD domain.

Belongs to the expansin family. Expansin B subfamily.

It localises to the secreted. In Phalaris aquatica (Canary grass), this protein is Major pollen allergen Pha a 1.